A 117-amino-acid polypeptide reads, in one-letter code: Large ribosomal subunit protein bL19 (117 aa).

The protein belongs to the bacterial ribosomal protein bL19 family.

Its function is as follows. This protein is located at the 30S-50S ribosomal subunit interface and may play a role in the structure and function of the aminoacyl-tRNA binding site. The sequence is that of Large ribosomal subunit protein bL19 from Phocaeicola vulgatus (strain ATCC 8482 / DSM 1447 / JCM 5826 / CCUG 4940 / NBRC 14291 / NCTC 11154) (Bacteroides vulgatus).